We begin with the raw amino-acid sequence, 209 residues long: tRNA (guanine-N(7)-)-methyltransferase (209 aa).

Positions 35, 60, 87, and 113 each coordinate S-adenosyl-L-methionine. The active site involves Asp113. Positions 117 and 149 each coordinate substrate.

The protein belongs to the class I-like SAM-binding methyltransferase superfamily. TrmB family.

It carries out the reaction guanosine(46) in tRNA + S-adenosyl-L-methionine = N(7)-methylguanosine(46) in tRNA + S-adenosyl-L-homocysteine. It participates in tRNA modification; N(7)-methylguanine-tRNA biosynthesis. In terms of biological role, catalyzes the formation of N(7)-methylguanine at position 46 (m7G46) in tRNA. This Prochlorococcus marinus subsp. pastoris (strain CCMP1986 / NIES-2087 / MED4) protein is tRNA (guanine-N(7)-)-methyltransferase.